Consider the following 92-residue polypeptide: Large ribosomal subunit protein bL31 (92 aa).

The disordered stretch occupies residues 66–92 (GMGSANPDVDAPAPKKAAKKSDAESDS). The segment covering 70 to 80 (ANPDVDAPAPK) has biased composition (low complexity).

This sequence belongs to the bacterial ribosomal protein bL31 family. Type A subfamily. In terms of assembly, part of the 50S ribosomal subunit.

Binds the 23S rRNA. This chain is Large ribosomal subunit protein bL31, found in Synechococcus sp. (strain RCC307).